Consider the following 302-residue polypeptide: Taste receptor type 2 member 104 (302 aa).

Residues 1 to 7 (MLSMLES) are Extracellular-facing. A helical transmembrane segment spans residues 8 to 28 (ILLSVATSEAMLGILGNIFIV). Residues 29 to 43 (LVNCTNWVRNKKLSK) are Cytoplasmic-facing. Residues 44–64 (INFILTGLAISRVFTIWIITL) form a helical membrane-spanning segment. Over 65-87 (DAYTKVFFLTTLMPSNLHECISY) the chain is Extracellular. Residues 88–108 (IWVIINHLSVWFATSLSIFYF) traverse the membrane as a helical segment. Topologically, residues 109–128 (LKIANFSHYIFLWLKRRADK) are cytoplasmic. A helical membrane pass occupies residues 129–149 (VFVFLIGYLIITWLASFPLAV). Topologically, residues 150-182 (TVIKNIKVHHNNTSWLIQLEKRELLINYVFANM) are extracellular. N-linked (GlcNAc...) asparagine glycans are attached at residues asparagine 160 and asparagine 161. Residues 183–203 (GPISLFMVAVFTCFLLTISLW) form a helical membrane-spanning segment. The Cytoplasmic portion of the chain corresponds to 204–233 (RHRRRMQSTGSKFRDLNTEVHVKAMKVLIS). Residues 234–254 (FIILFILYFMGVLIETLCLFL) form a helical membrane-spanning segment. Topologically, residues 255–257 (TEN) are extracellular. A helical transmembrane segment spans residues 258–278 (ILLFIFGFTLSSTYPCCHSFI). Residues 279 to 302 (LILTSRELKQASMRALQRLKCCET) lie on the Cytoplasmic side of the membrane.

It belongs to the G-protein coupled receptor T2R family.

It is found in the membrane. Functionally, putative taste receptor which may play a role in the perception of bitterness. The protein is Taste receptor type 2 member 104 of Rattus norvegicus (Rat).